The following is a 145-amino-acid chain: MPKIKTSRVKYPGGWELIEPTIRELDAKMREAENDTHDGKRKCEALWPIFRISHQRSRYIYDLYYRRKEISKELYEFCLDQGYADRNLIAKWKKPGYERLCCLRCIQTRDHNFATTCVCRVPKHLREEKVIECVHCGCRGCASGD.

The protein belongs to the BUD31 (G10) family.

Its subcellular location is the nucleus. In Oryza sativa subsp. japonica (Rice), this protein is Protein BUD31 homolog 1.